Here is a 219-residue protein sequence, read N- to C-terminus: 7-cyano-7-deazaguanine synthase (219 aa).

ATP is bound at residue F10–L20. The Zn(2+) site is built by C188, C197, C200, and C203.

The protein belongs to the QueC family. As to quaternary structure, homodimer. Zn(2+) is required as a cofactor.

The enzyme catalyses 7-carboxy-7-deazaguanine + NH4(+) + ATP = 7-cyano-7-deazaguanine + ADP + phosphate + H2O + H(+). It participates in purine metabolism; 7-cyano-7-deazaguanine biosynthesis. Functionally, catalyzes the ATP-dependent conversion of 7-carboxy-7-deazaguanine (CDG) to 7-cyano-7-deazaguanine (preQ(0)). In Clostridium botulinum (strain 657 / Type Ba4), this protein is 7-cyano-7-deazaguanine synthase.